An 838-amino-acid polypeptide reads, in one-letter code: MGPGLWVVMGVLVGVAGGHDTYWTEQIDPWFLHGLGLARTYWRDTNTGRLWLPNTPDASDPQRGRLAPPGELNLTTASVPMLRWYAERFCFVLVTTAEFPRDPGQLLYIPKTYLLGRPRNASLPELPEAGPTSRPPAEVTQLKGLSHNPGASALLRSRAWVTFAAAPDREGLTFPRGDDGATERHPDGRRNAPPPGPPAGTPRHPTTNLSIAHLHNASVTWLAARGLLRTPGRYVYLSPSASTWPVGVWTTGGLAFGCDAALVRARYGKGFMGLVISMRDSPPAEIIVVPADKTLARVGNPTDENAPAVLPGPPAGPRYRVFVLGAPTPADNGSALDALRRVAGYPEESTNYAQYMSRAYAEFLGEDPGSGTDARPSLFWRLAGLLASSGFAFVNAAHAHDAIRLSDLLGFLAHSRVLAGLAARGAAGCAADSVFLNVSVLDPAARLRLEARLGHLVAAILEREQSLVAHALGYQLAFVLDSPAAYGAVAPSAARLIDALYAEFLGGRALTAPMVRRALFYATAVLRAPFLAGAPSAEQRERARRGLLITTALCTSDVAAATHADLRAALARTDHQKNLFWLPDHFSPCAASLRFDLAEGGFILDALAMATRSDIPADVMAQQTRGVASVLTRWAHYNALIRAFVPEATHQCSGPSHNAEPRILVPITHNASYVVTHTPLPRGIGYKLTGVDVRRPLFITYLTATCEGHAREIEPKRLVRTENRRDLGLVGAVFLRYTPAGEVMSVLLVDTDATQQQLAQGPVAGTPNVFSSDVPSVALLLFPNGTVIHLLAFDTLPIATIAPGFLAASALGVVMITAALAGILRVVRTCVPFLWRRE.

The signal sequence occupies residues 1-18 (MGPGLWVVMGVLVGVAGG). Residues 21-803 (TYWTEQIDPW…DTLPIATIAP (783 aa)) are Virion surface-facing. N-linked (GlcNAc...) asparagine; by host glycans are attached at residues asparagine 73 and asparagine 120. Over residues 171 to 190 (GLTFPRGDDGATERHPDGRR) the composition is skewed to basic and acidic residues. Residues 171–207 (GLTFPRGDDGATERHPDGRRNAPPPGPPAGTPRHPTT) form a disordered region. 2 N-linked (GlcNAc...) asparagine; by host glycosylation sites follow: asparagine 208 and asparagine 216. A disulfide bond links cysteine 258 and cysteine 429. The interval 259-323 (DAALVRARYG…PAGPRYRVFV (65 aa)) is interaction with gL. N-linked (GlcNAc...) asparagine; by host glycosylation is found at asparagine 332, asparagine 437, asparagine 670, and asparagine 784. The chain crosses the membrane as a helical span at residues 804-824 (GFLAASALGVVMITAALAGIL). The Intravirion portion of the chain corresponds to 825–838 (RVVRTCVPFLWRRE).

The protein belongs to the herpesviridae glycoprotein H family. In terms of assembly, interacts with glycoprotein L (gL); this interaction is necessary for the correct processing and cell surface expression of gH. The heterodimer gH/gL seems to interact with gB trimers during fusion. Interacts with host integrins ITGAV/ITGB3 to mediate viral entry into epithelial cells. Post-translationally, N-glycosylated, O-glycosylated, and sialylated.

It localises to the virion membrane. Its subcellular location is the host cell membrane. The protein resides in the host endosome membrane. The heterodimer glycoprotein H-glycoprotein L is required for the fusion of viral and plasma membranes leading to virus entry into the host cell. Following initial binding to host receptor, membrane fusion is mediated by the fusion machinery composed of gB and the heterodimer gH/gL. May also be involved in the fusion between the virion envelope and the outer nuclear membrane during virion morphogenesis. Interaction with host integrins ITGAV/ITGB3 triggers release of cytosolic Ca(2+) and FAK phosphorylation leading to efficient viral entry into host genital tract epithelial cells. In Human herpesvirus 2 (strain HG52) (HHV-2), this protein is Envelope glycoprotein H.